We begin with the raw amino-acid sequence, 262 residues long: Pyridoxine 5'-phosphate synthase (262 aa).

A 3-amino-2-oxopropyl phosphate-binding site is contributed by asparagine 6. Residue 8 to 9 (DH) participates in 1-deoxy-D-xylulose 5-phosphate binding. Residue arginine 17 participates in 3-amino-2-oxopropyl phosphate binding. Histidine 43 acts as the Proton acceptor in catalysis. 1-deoxy-D-xylulose 5-phosphate-binding residues include arginine 45 and histidine 50. Glutamate 70 acts as the Proton acceptor in catalysis. Residue threonine 102 coordinates 1-deoxy-D-xylulose 5-phosphate. The active-site Proton donor is the histidine 215. Residues glycine 216 and 237 to 238 (GH) contribute to the 3-amino-2-oxopropyl phosphate site.

It belongs to the PNP synthase family. In terms of assembly, homooctamer; tetramer of dimers.

Its subcellular location is the cytoplasm. It catalyses the reaction 3-amino-2-oxopropyl phosphate + 1-deoxy-D-xylulose 5-phosphate = pyridoxine 5'-phosphate + phosphate + 2 H2O + H(+). Its pathway is cofactor biosynthesis; pyridoxine 5'-phosphate biosynthesis; pyridoxine 5'-phosphate from D-erythrose 4-phosphate: step 5/5. Functionally, catalyzes the complicated ring closure reaction between the two acyclic compounds 1-deoxy-D-xylulose-5-phosphate (DXP) and 3-amino-2-oxopropyl phosphate (1-amino-acetone-3-phosphate or AAP) to form pyridoxine 5'-phosphate (PNP) and inorganic phosphate. This chain is Pyridoxine 5'-phosphate synthase, found in Helicobacter pylori (strain ATCC 700392 / 26695) (Campylobacter pylori).